The following is a 344-amino-acid chain: DNA-directed RNA polymerase subunit alpha (344 aa).

The segment at methionine 1–glutamate 246 is alpha N-terminal domain (alpha-NTD). The alpha C-terminal domain (alpha-CTD) stretch occupies residues glutamate 259 to glutamate 344.

It belongs to the RNA polymerase alpha chain family. In terms of assembly, homodimer. The RNAP catalytic core consists of 2 alpha, 1 beta, 1 beta' and 1 omega subunit. When a sigma factor is associated with the core the holoenzyme is formed, which can initiate transcription.

The enzyme catalyses RNA(n) + a ribonucleoside 5'-triphosphate = RNA(n+1) + diphosphate. Functionally, DNA-dependent RNA polymerase catalyzes the transcription of DNA into RNA using the four ribonucleoside triphosphates as substrates. This is DNA-directed RNA polymerase subunit alpha from Borreliella burgdorferi (strain ATCC 35210 / DSM 4680 / CIP 102532 / B31) (Borrelia burgdorferi).